Consider the following 122-residue polypeptide: UPF0102 protein Atu0303 (122 aa).

Belongs to the UPF0102 family.

The chain is UPF0102 protein Atu0303 from Agrobacterium fabrum (strain C58 / ATCC 33970) (Agrobacterium tumefaciens (strain C58)).